The primary structure comprises 273 residues: 4-hydroxy-tetrahydrodipicolinate reductase (273 aa).

Residues 12–17 (GAGGRM) and E38 each bind NAD(+). Residue R39 participates in NADP(+) binding. Residues 102–104 (GTT) and 126–129 (AANF) each bind NAD(+). H159 functions as the Proton donor/acceptor in the catalytic mechanism. Residue H160 participates in (S)-2,3,4,5-tetrahydrodipicolinate binding. K163 serves as the catalytic Proton donor. Residue 169 to 170 (GT) coordinates (S)-2,3,4,5-tetrahydrodipicolinate.

This sequence belongs to the DapB family. Homotetramer.

It localises to the cytoplasm. The enzyme catalyses (S)-2,3,4,5-tetrahydrodipicolinate + NAD(+) + H2O = (2S,4S)-4-hydroxy-2,3,4,5-tetrahydrodipicolinate + NADH + H(+). It catalyses the reaction (S)-2,3,4,5-tetrahydrodipicolinate + NADP(+) + H2O = (2S,4S)-4-hydroxy-2,3,4,5-tetrahydrodipicolinate + NADPH + H(+). The protein operates within amino-acid biosynthesis; L-lysine biosynthesis via DAP pathway; (S)-tetrahydrodipicolinate from L-aspartate: step 4/4. Functionally, catalyzes the conversion of 4-hydroxy-tetrahydrodipicolinate (HTPA) to tetrahydrodipicolinate. This chain is 4-hydroxy-tetrahydrodipicolinate reductase, found in Salmonella typhimurium (strain LT2 / SGSC1412 / ATCC 700720).